We begin with the raw amino-acid sequence, 201 residues long: Large ribosomal subunit protein uL4 (201 aa).

The disordered stretch occupies residues 44 to 68 (RAQKSRAEVSGSGRKPWRQKGTGRA).

The protein belongs to the universal ribosomal protein uL4 family. In terms of assembly, part of the 50S ribosomal subunit.

One of the primary rRNA binding proteins, this protein initially binds near the 5'-end of the 23S rRNA. It is important during the early stages of 50S assembly. It makes multiple contacts with different domains of the 23S rRNA in the assembled 50S subunit and ribosome. In terms of biological role, forms part of the polypeptide exit tunnel. The chain is Large ribosomal subunit protein uL4 from Buchnera aphidicola subsp. Acyrthosiphon pisum (strain APS) (Acyrthosiphon pisum symbiotic bacterium).